Reading from the N-terminus, the 323-residue chain is Thioredoxin reductase (323 aa).

An FAD-binding site is contributed by 42–49; sequence YRAEADGA. An intrachain disulfide couples cysteine 143 to cysteine 146. Residue 286–295 participates in FAD binding; the sequence is DVLCNEVKQA.

The protein belongs to the class-II pyridine nucleotide-disulfide oxidoreductase family. As to quaternary structure, homodimer. It depends on FAD as a cofactor.

It is found in the cytoplasm. It carries out the reaction [thioredoxin]-dithiol + NADP(+) = [thioredoxin]-disulfide + NADPH + H(+). The sequence is that of Thioredoxin reductase (trxB) from Aquifex aeolicus (strain VF5).